Reading from the N-terminus, the 157-residue chain is MMDVLMYLFETYIHSDVELNVEQEKLEDELLKAGFHQEAVYKALDWLEDLARLQDTDEHARVATGTSTSMRIYTQQEIDGINTACRGFLLFLEQIKVLTSETREMVIEQVMALETDELSLDDLKWVVLMVLFNVPGQESAYTQMEELLYTSDVGLTH.

It belongs to the Smg family.

This Aliivibrio fischeri (strain MJ11) (Vibrio fischeri) protein is Protein Smg homolog.